The following is an 81-amino-acid chain: Small ribosomal subunit protein bS16 (81 aa).

This sequence belongs to the bacterial ribosomal protein bS16 family.

This Neisseria meningitidis serogroup C (strain 053442) protein is Small ribosomal subunit protein bS16.